Reading from the N-terminus, the 70-residue chain is MGLIAAAIAIGLSALGAGIGNGLIVSRTVEGVARQPEARGQLMSIMFIGIGLVEALPIIGVVIAFMTLFQ.

The next 2 helical transmembrane spans lie at 4–24 and 45–65; these read IAAAIAIGLSALGAGIGNGLI and IMFIGIGLVEALPIIGVVIAF.

This sequence belongs to the ATPase C chain family. In terms of assembly, F-type ATPases have 2 components, F(1) - the catalytic core - and F(0) - the membrane proton channel. F(1) has five subunits: alpha(3), beta(3), gamma(1), delta(1), epsilon(1). F(0) has three main subunits: a(1), b(2) and c(10-14). The alpha and beta chains form an alternating ring which encloses part of the gamma chain. F(1) is attached to F(0) by a central stalk formed by the gamma and epsilon chains, while a peripheral stalk is formed by the delta and b chains.

It localises to the cell membrane. Its function is as follows. F(1)F(0) ATP synthase produces ATP from ADP in the presence of a proton or sodium gradient. F-type ATPases consist of two structural domains, F(1) containing the extramembraneous catalytic core and F(0) containing the membrane proton channel, linked together by a central stalk and a peripheral stalk. During catalysis, ATP synthesis in the catalytic domain of F(1) is coupled via a rotary mechanism of the central stalk subunits to proton translocation. Key component of the F(0) channel; it plays a direct role in translocation across the membrane. A homomeric c-ring of between 10-14 subunits forms the central stalk rotor element with the F(1) delta and epsilon subunits. The protein is ATP synthase subunit c of Staphylococcus haemolyticus (strain JCSC1435).